The chain runs to 67 residues: Protein LITTLE ZIPPER 3 (67 aa).

Residues 14 to 59 adopt a coiled-coil conformation; sequence YIMKENERLRKKAELLNQENQQLLFQLKQKLSKTKNSNNGSNNDNK. The interval 42 to 67 is disordered; it reads QKLSKTKNSNNGSNNDNKSSSASGQS.

Interacts with REV. Interacts with ATBH-8, ATBH-9, ATB-14 and ATB-15. In terms of tissue distribution, expressed in the adaxial epidermis of the cotyledons and leaves, and in the vascular cylinder of wild-type torpedo stage embryos. Confined in the central zone and the organizing center in the shoot apical meristem.

The protein resides in the nucleus. Its function is as follows. Competitive inhibitor of the HD-ZIPIII transcription factors in shoot apical meristem (SAM) development. Acts by forming non-functional heterodimers. Part of a negative feedback loop. Involved in SAM development and lateral organ patterning. Essential for proper functioning of stem cells in the SAM. The chain is Protein LITTLE ZIPPER 3 from Arabidopsis thaliana (Mouse-ear cress).